A 366-amino-acid chain; its full sequence is Sulfite reductase, dissimilatory-type subunit beta (366 aa).

[4Fe-4S] cluster-binding residues include Cys140, Cys177, Cys178, Cys182, Cys220, Cys241, Cys244, and Cys247. Cys182 contacts siroheme. Residues 232 to 262 form the 4Fe-4S ferredoxin-type domain; the sequence is KTIKVDVEKCMYCGNCYTMCPGMPLFDPEND.

Heterotetramer of two alpha and two beta subunits. Requires [4Fe-4S] cluster as cofactor. Siroheme is required as a cofactor.

The protein localises to the membrane. It carries out the reaction [DsrC protein]-trisulfide + NAD(+) + 3 H2O = [DsrC protein]-dithiol + sulfite + NADH + 3 H(+). Functionally, catalyzes the reduction of sulfite to sulfide. This is the terminal oxidation reaction in sulfate respiration. This is Sulfite reductase, dissimilatory-type subunit beta (dsrB) from Archaeoglobus fulgidus (strain ATCC 49558 / DSM 4304 / JCM 9628 / NBRC 100126 / VC-16).